Reading from the N-terminus, the 105-residue chain is Ketoisovalerate oxidoreductase subunit VorD (105 aa).

2 4Fe-4S ferredoxin-type domains span residues 44-73 (FMPV…IKED) and 74-103 (GFVA…MVRE). C53, C56, C59, C63, C83, C86, C89, and C93 together coordinate [4Fe-4S] cluster.

In terms of assembly, heterotetramer of one alpha, one beta, one delta and one gamma chain. It depends on [4Fe-4S] cluster as a cofactor.

It catalyses the reaction 3-methyl-2-oxobutanoate + 2 oxidized [2Fe-2S]-[ferredoxin] + CoA = 2-methylpropanoyl-CoA + 2 reduced [2Fe-2S]-[ferredoxin] + CO2 + H(+). The protein is Ketoisovalerate oxidoreductase subunit VorD (vorD) of Pyrococcus abyssi (strain GE5 / Orsay).